The sequence spans 87 residues: Acyl carrier protein TtuC (87 aa).

Residues 11-87 (ITAEDVQQWL…HALSQFIAAK (77 aa)) form the Carrier domain. S48 carries the post-translational modification O-(pantetheine 4'-phosphoryl)serine.

Pantetheine 4'-phosphate is required as a cofactor.

In terms of biological role, carrier protein likely involved in the biosynthesis of a polyyne metabolite. Accepts as substrate the activated form of decanoic acid from TtuA. The chain is Acyl carrier protein TtuC from Teredinibacter turnerae (strain ATCC 39867 / T7901).